Reading from the N-terminus, the 231-residue chain is Biosynthetic peptidoglycan transglycosylase (231 aa).

Residues 12–32 (LLAAFALLLLWQVWLFAQVAW) traverse the membrane as a helical segment.

This sequence belongs to the glycosyltransferase 51 family.

It localises to the cell inner membrane. The catalysed reaction is [GlcNAc-(1-&gt;4)-Mur2Ac(oyl-L-Ala-gamma-D-Glu-L-Lys-D-Ala-D-Ala)](n)-di-trans,octa-cis-undecaprenyl diphosphate + beta-D-GlcNAc-(1-&gt;4)-Mur2Ac(oyl-L-Ala-gamma-D-Glu-L-Lys-D-Ala-D-Ala)-di-trans,octa-cis-undecaprenyl diphosphate = [GlcNAc-(1-&gt;4)-Mur2Ac(oyl-L-Ala-gamma-D-Glu-L-Lys-D-Ala-D-Ala)](n+1)-di-trans,octa-cis-undecaprenyl diphosphate + di-trans,octa-cis-undecaprenyl diphosphate + H(+). It participates in cell wall biogenesis; peptidoglycan biosynthesis. In terms of biological role, peptidoglycan polymerase that catalyzes glycan chain elongation from lipid-linked precursors. The sequence is that of Biosynthetic peptidoglycan transglycosylase from Azoarcus sp. (strain BH72).